Consider the following 273-residue polypeptide: Progestin and adipoQ receptor family member 4 (273 aa).

The next 5 membrane-spanning stretches (helical) occupy residues 52–72, 79–99, 115–135, 185–205, and 245–265; these read IYTH…TMPW, GWLG…SVLY, LLAL…LPII, LLVF…SLPC, and LLSV…LLWA.

It belongs to the ADIPOR family. Interacts with CERS2 and CERS5; the interaction regulates CERS2 and CERS5 stabilities and activities and is inhibited in presence of ceramides. As to expression, expressed in adipose tissue.

The protein resides in the golgi apparatus membrane. In terms of biological role, plays a role in maintaining adipose tissue function through the regulation of ceramide levels. Mediates the stability of ceramide synthetases, CERS2 and CERS5, and their activities. This Mus musculus (Mouse) protein is Progestin and adipoQ receptor family member 4.